We begin with the raw amino-acid sequence, 626 residues long: MMLRFILASLLLSSFSLYSSLARPAPYALRISCGARKNVRTPPTYALWFKDIAYTGGVPANATTPTYITPPLKTLRYFPISEGPNNCYNIVRVPKGHYSVRIFFGLVDQPSFDKEPLFDISIEGTQISSLKSGWSSQDDQVFAEALIFLLGGTATICFHSTGHGDPAILSIEILQVDDKAYSFGEGWGQGVILRTATRLTCGTGKSRFDEDYRGDHWGGDRFWNRMRSFGKSADSPRSTEETIKKASVSPNFYPEGLYQSALVSTDDQPDLTYSLDVEPNRNYSVWLHFAEIDNTITAEGKRVFDVVINGDTFFEDVDIIKMSGGRYAALVLNATVTVSGRTLTVVLQPKAGGHAIINAIEVFEIITAEFKTLRDEVSALQKMKKALGLPSRFGWNGDPCVPPQHPWSGANCQLDKNTSRWFIDGLDLDNQGLKGFLPNDISKLKHLQSINLSENNIRGGIPASLGSVTSLEVLDLSYNSFNGSIPETLGELTSLRILNLNGNSLSGKVPAAVGGRLLHRASFNFTDNAGLCGIPGLPACGPHLSSGAKIGIAFGVSLAFLLIVACAMIWWKRRQNILRAQQIAARGAPYAKKRTHVSHDIQMSRHGHNNHGQARTAVENGPSLLS.

A signal peptide spans 1 to 22 (MMLRFILASLLLSSFSLYSSLA). The Extracellular portion of the chain corresponds to 23–549 (RPAPYALRIS…CGPHLSSGAK (527 aa)). Residues asparagine 61, asparagine 282, asparagine 333, and asparagine 417 are each glycosylated (N-linked (GlcNAc...) asparagine). LRR repeat units follow at residues 420–444 (RWFIDGLDLDNQGLKGFLPNDISKL), 445–468 (KHLQSINLSENNIRGGIPASLGSV), 470–492 (SLEVLDLSYNSFNGSIPETLGEL), and 493–516 (TSLRILNLNGNSLSGKVPAAVGGR). 2 N-linked (GlcNAc...) asparagine glycosylation sites follow: asparagine 451 and asparagine 482. Asparagine 524 is a glycosylation site (N-linked (GlcNAc...) asparagine). Residues 550 to 570 (IGIAFGVSLAFLLIVACAMIW) traverse the membrane as a helical segment. Residues 571–626 (WKRRQNILRAQQIAARGAPYAKKRTHVSHDIQMSRHGHNNHGQARTAVENGPSLLS) are Cytoplasmic-facing. A disordered region spans residues 603–626 (MSRHGHNNHGQARTAVENGPSLLS).

The protein belongs to the RLP family.

The protein resides in the cell membrane. The polypeptide is Receptor-like protein 4 (Arabidopsis thaliana (Mouse-ear cress)).